Reading from the N-terminus, the 517-residue chain is Cytochrome P450 11B, mitochondrial (517 aa).

Residues 1–45 (MLEKTAARQIGSCLMRCRTLDTTSPLWTGFSRLSTAPLIHEARED) constitute a mitochondrion transit peptide. A heme-binding site is contributed by Cys-465.

This sequence belongs to the cytochrome P450 family. Heme serves as cofactor.

It localises to the mitochondrion membrane. The enzyme catalyses a steroid + 2 reduced [adrenodoxin] + O2 + 2 H(+) = an 11beta-hydroxysteroid + 2 oxidized [adrenodoxin] + H2O. Functionally, has 11 beta-hydroxylation, 18-hydroxylation activities and aldosterone synthetic activity. Catalyzes the final steps of glucocorticoid and mineralocorticoid biosynthesis. The sequence is that of Cytochrome P450 11B, mitochondrial (CYP11B) from Aquarana catesbeiana (American bullfrog).